A 434-amino-acid chain; its full sequence is MTTQVVNVIGAGLAGSEAAYQIAKRGVQVRLYEMRPVRQTPAHHTDKFAELVCSNSLRANTLTNAVGVIKEEMRLMDSVIIRAADECSVPAGGALAVDRHEFAAKVTEYVKNHPNVTVMNEEITEIPEGPTIIATGPLTSPDLSAQLKELTGEDYFYFYDAAAPIVEKDSIDMNKVYLKSRYDKGEAAYLNCPMTEEEFDRFYEALIAAETVPLKEFEKEIFFEGCMPVEVMASRGRQTLVFGPMKPVGLEDPKTGKTPYAVVQLRQDDAAGTLYNIVGFQTHLKWGPQKEVLQLIPGLENAEIVRYGVMHRNTFINSPNLLRPTYQYKQRDDLFFAGQMTGVEGYVESAASGLLAGINAARLVKGEEPVVLPPVTAMGSMANYITATNAKNFQPMNANFGLFAPLEKKIKKKAERNEAYATRALEMIRNFVNI.

An FAD-binding site is contributed by 10–15 (GAGLAG).

Belongs to the MnmG family. TrmFO subfamily. The cofactor is FAD.

The protein localises to the cytoplasm. It carries out the reaction uridine(54) in tRNA + (6R)-5,10-methylene-5,6,7,8-tetrahydrofolate + NADH + H(+) = 5-methyluridine(54) in tRNA + (6S)-5,6,7,8-tetrahydrofolate + NAD(+). The enzyme catalyses uridine(54) in tRNA + (6R)-5,10-methylene-5,6,7,8-tetrahydrofolate + NADPH + H(+) = 5-methyluridine(54) in tRNA + (6S)-5,6,7,8-tetrahydrofolate + NADP(+). Functionally, catalyzes the folate-dependent formation of 5-methyl-uridine at position 54 (M-5-U54) in all tRNAs. The polypeptide is Methylenetetrahydrofolate--tRNA-(uracil-5-)-methyltransferase TrmFO (Bacillus anthracis (strain A0248)).